The primary structure comprises 143 residues: Small ribosomal subunit protein bS18 (143 aa).

Positions 1–72 (MARPDMGGPK…RGGEEGGRRG (72 aa)) are disordered. Positions 10–50 (KSSGGFGGPRSGGGFGGGGYGGGGGGGGGYGGGGGGGFGGR) are enriched in gly residues. Residues 51–70 (GGDRGDRGDRDDRGGEEGGR) are compositionally biased toward basic and acidic residues.

The protein belongs to the bacterial ribosomal protein bS18 family. As to quaternary structure, part of the 30S ribosomal subunit. Forms a tight heterodimer with protein bS6.

Its function is as follows. Binds as a heterodimer with protein bS6 to the central domain of the 16S rRNA, where it helps stabilize the platform of the 30S subunit. The chain is Small ribosomal subunit protein bS18 from Anaeromyxobacter sp. (strain Fw109-5).